The chain runs to 256 residues: Ubiquinone/menaquinone biosynthesis C-methyltransferase UbiE (256 aa).

S-adenosyl-L-methionine-binding positions include Thr-79, Asp-100, and Asp-128–Ala-129.

It belongs to the class I-like SAM-binding methyltransferase superfamily. MenG/UbiE family.

The catalysed reaction is a 2-demethylmenaquinol + S-adenosyl-L-methionine = a menaquinol + S-adenosyl-L-homocysteine + H(+). It catalyses the reaction a 2-methoxy-6-(all-trans-polyprenyl)benzene-1,4-diol + S-adenosyl-L-methionine = a 5-methoxy-2-methyl-3-(all-trans-polyprenyl)benzene-1,4-diol + S-adenosyl-L-homocysteine + H(+). It functions in the pathway quinol/quinone metabolism; menaquinone biosynthesis; menaquinol from 1,4-dihydroxy-2-naphthoate: step 2/2. The protein operates within cofactor biosynthesis; ubiquinone biosynthesis. Its function is as follows. Methyltransferase required for the conversion of demethylmenaquinol (DMKH2) to menaquinol (MKH2) and the conversion of 2-polyprenyl-6-methoxy-1,4-benzoquinol (DDMQH2) to 2-polyprenyl-3-methyl-6-methoxy-1,4-benzoquinol (DMQH2). The chain is Ubiquinone/menaquinone biosynthesis C-methyltransferase UbiE from Pseudomonas aeruginosa (strain LESB58).